Here is a 422-residue protein sequence, read N- to C-terminus: Glutamate-1-semialdehyde 2,1-aminomutase (422 aa).

Residue Lys264 is modified to N6-(pyridoxal phosphate)lysine.

It belongs to the class-III pyridoxal-phosphate-dependent aminotransferase family. HemL subfamily. In terms of assembly, homodimer. Requires pyridoxal 5'-phosphate as cofactor.

Its subcellular location is the cytoplasm. It catalyses the reaction (S)-4-amino-5-oxopentanoate = 5-aminolevulinate. It functions in the pathway porphyrin-containing compound metabolism; protoporphyrin-IX biosynthesis; 5-aminolevulinate from L-glutamyl-tRNA(Glu): step 2/2. This is Glutamate-1-semialdehyde 2,1-aminomutase from Clostridium acetobutylicum (strain ATCC 824 / DSM 792 / JCM 1419 / IAM 19013 / LMG 5710 / NBRC 13948 / NRRL B-527 / VKM B-1787 / 2291 / W).